The chain runs to 228 residues: Probable calcium-binding protein CML48 (228 aa).

EF-hand domains are found at residues Glu-52–Asp-87 and Asn-121–Val-156. Positions 65, 67, 69, and 76 each coordinate Ca(2+).

In terms of biological role, potential calcium sensor. The polypeptide is Probable calcium-binding protein CML48 (CML48) (Arabidopsis thaliana (Mouse-ear cress)).